A 109-amino-acid polypeptide reads, in one-letter code: uncharacterized protein (109 aa).

The next 2 helical transmembrane spans lie at 18–38 (TTLA…LLTL) and 48–68 (AGLI…VIAL).

It is found in the cell membrane. This is an uncharacterized protein from Mycobacterium tuberculosis (strain CDC 1551 / Oshkosh).